We begin with the raw amino-acid sequence, 123 residues long: Small ribosomal subunit protein uS12 (123 aa).

The protein belongs to the universal ribosomal protein uS12 family. As to quaternary structure, part of the 30S ribosomal subunit. Contacts proteins S8 and S17. May interact with IF1 in the 30S initiation complex.

Its function is as follows. With S4 and S5 plays an important role in translational accuracy. Functionally, interacts with and stabilizes bases of the 16S rRNA that are involved in tRNA selection in the A site and with the mRNA backbone. Located at the interface of the 30S and 50S subunits, it traverses the body of the 30S subunit contacting proteins on the other side and probably holding the rRNA structure together. The combined cluster of proteins S8, S12 and S17 appears to hold together the shoulder and platform of the 30S subunit. The sequence is that of Small ribosomal subunit protein uS12 from Corynebacterium diphtheriae (strain ATCC 700971 / NCTC 13129 / Biotype gravis).